Reading from the N-terminus, the 1300-residue chain is Sal-like protein 3 (1300 aa).

The segment covering 1–11 (MSRRKQAKPQH) has biased composition (basic residues). 4 disordered regions span residues 1-51 (MSRR…EETS), 84-162 (EDAP…YGAP), 234-258 (QRPP…PSQL), and 277-352 (GSGP…GSLL). A C2H2-type 1; atypical zinc finger spans residues 51-73 (SVCEKCCAEFFKWADFLEHQRSC). Pro residues predominate over residues 87-100 (PAPPPEDFPEPSPA). At Ser109 the chain carries Phosphoserine. Over residues 122–132 (GEARPVEKEAE) the composition is skewed to basic and acidic residues. Positions 145 to 157 (PRPPPAAPAPPTP) are enriched in pro residues. Low complexity-rich tracts occupy residues 277–319 (GSGP…AAPA) and 329–352 (PQSA…GSLL). 2 C2H2-type zinc fingers span residues 420-442 (HKCR…LRSH) and 448-470 (FKCN…FQRH). The tract at residues 523–633 (PTSVGLQLPP…VDGAPTSLGS (111 aa)) is disordered. The span at 543–561 (SPSATPASRSPQRPSPASS) shows a compositional bias: low complexity. Residues 577–586 (VSATAESPQS) are compositionally biased toward polar residues. 3 C2H2-type zinc fingers span residues 679 to 701 (NQCV…YRTH), 707 to 729 (FKCK…FGVH), and 739 to 761 (HSCP…IRMH). A disordered region spans residues 864-955 (SVENGSGESD…GSGGAPGRAG (92 aa)). Positions 889–910 (RSAGSPALSESSSSQALSPAPS) are enriched in low complexity. Ser919 carries the post-translational modification Phosphoserine. 4 C2H2-type zinc fingers span residues 977-999 (TVCG…YRSH), 1005-1027 (FVCA…LLTH), 1113-1135 (HNCQ…ERTH), and 1141-1163 (FGCT…MGTH). Ser1177 is subject to Phosphoserine. A disordered region spans residues 1259-1279 (GMDKARTGSSPPIVSLDKASS).

The protein belongs to the sal C2H2-type zinc-finger protein family. Widely expressed in adult with highest levels in heart. Expressed in fetal brain (in neurons of hippocampus, cortex, mediodorsal and ventrolateral thalamic nuclei, putamen, cerebellum and brainstem).

Its subcellular location is the nucleus. Probable transcription factor. In Homo sapiens (Human), this protein is Sal-like protein 3 (SALL3).